The following is a 134-amino-acid chain: Small ribosomal subunit protein uS11 (134 aa).

The protein belongs to the universal ribosomal protein uS11 family. Part of the 30S ribosomal subunit. Interacts with proteins S7 and S18. Binds to IF-3.

In terms of biological role, located on the platform of the 30S subunit, it bridges several disparate RNA helices of the 16S rRNA. Forms part of the Shine-Dalgarno cleft in the 70S ribosome. The chain is Small ribosomal subunit protein uS11 from Janthinobacterium sp. (strain Marseille) (Minibacterium massiliensis).